The following is a 469-amino-acid chain: Uronate isomerase (469 aa).

It belongs to the metallo-dependent hydrolases superfamily. Uronate isomerase family.

The catalysed reaction is D-glucuronate = D-fructuronate. The enzyme catalyses aldehydo-D-galacturonate = keto-D-tagaturonate. It functions in the pathway carbohydrate metabolism; pentose and glucuronate interconversion. In Mesorhizobium japonicum (strain LMG 29417 / CECT 9101 / MAFF 303099) (Mesorhizobium loti (strain MAFF 303099)), this protein is Uronate isomerase.